We begin with the raw amino-acid sequence, 56 residues long: Protein hunchback (56 aa).

3 C2H2-type zinc fingers span residues His1 to His5, His11 to His33, and Tyr39 to Leu56.

It belongs to the hunchback C2H2-type zinc-finger protein family.

It localises to the nucleus. Functionally, gap class segmentation protein that controls development of head structures. This chain is Protein hunchback (hb), found in Bithynia tentaculata (Spire snail).